Here is a 244-residue protein sequence, read N- to C-terminus: Tetraspanin-7 (244 aa).

Topologically, residues 1 to 11 (METKPVITCLK) are cytoplasmic. A helical membrane pass occupies residues 12-35 (TLLIIYSFVFWITGVILLAVGVWG). Over 36–51 (KLTLGTYISLIAENST) the chain is Extracellular. The N-linked (GlcNAc...) asparagine glycan is linked to asparagine 49. The helical transmembrane segment at 52–70 (NAPYVLIGTGTTIVVFGLF) threads the bilayer. The Cytoplasmic segment spans residues 71-81 (GCFATCRGSPW). The chain crosses the membrane as a helical span at residues 82-107 (MLKLYAMFLSLVFLAELVAGISGFVF). Residues 108-208 (RHEIKDTFLR…LVTSFMETNM (101 aa)) are Extracellular-facing. Asparagine 150, asparagine 153, asparagine 172, and asparagine 183 each carry an N-linked (GlcNAc...) asparagine glycan. A helical membrane pass occupies residues 209-229 (GIIAGVAFGIAFSQLIGMLLA). Topologically, residues 230–244 (CCLSRFITANQYEMV) are cytoplasmic.

This sequence belongs to the tetraspanin (TM4SF) family.

Its subcellular location is the membrane. Its function is as follows. May be involved in cell proliferation and cell motility. The sequence is that of Tetraspanin-7 (TSPAN7) from Pongo pygmaeus (Bornean orangutan).